The chain runs to 164 residues: Translation initiation factor IF-3 (164 aa).

Belongs to the IF-3 family. In terms of assembly, monomer.

It is found in the cytoplasm. In terms of biological role, IF-3 binds to the 30S ribosomal subunit and shifts the equilibrium between 70S ribosomes and their 50S and 30S subunits in favor of the free subunits, thus enhancing the availability of 30S subunits on which protein synthesis initiation begins. The sequence is that of Translation initiation factor IF-3 from Bordetella bronchiseptica (strain ATCC BAA-588 / NCTC 13252 / RB50) (Alcaligenes bronchisepticus).